We begin with the raw amino-acid sequence, 208 residues long: Ribosomal RNA small subunit methyltransferase G (208 aa).

Residues G73, L78, 127–128, and R141 contribute to the S-adenosyl-L-methionine site; that span reads VE.

Belongs to the methyltransferase superfamily. RNA methyltransferase RsmG family.

It is found in the cytoplasm. The catalysed reaction is guanosine(527) in 16S rRNA + S-adenosyl-L-methionine = N(7)-methylguanosine(527) in 16S rRNA + S-adenosyl-L-homocysteine. Specifically methylates the N7 position of guanine in position 527 of 16S rRNA. The sequence is that of Ribosomal RNA small subunit methyltransferase G from Cereibacter sphaeroides (strain ATCC 17025 / ATH 2.4.3) (Rhodobacter sphaeroides).